Reading from the N-terminus, the 658-residue chain is Protein CFAP20DC (658 aa).

Disordered stretches follow at residues 312–522 (QQGE…EEEY) and 589–634 (PVNQ…LDSS). Residues 319–328 (SHPVKQTTPL) show a composition bias toward polar residues. Over residues 339–349 (PPRDPSADKGS) the composition is skewed to basic and acidic residues. 2 stretches are compositionally biased toward low complexity: residues 351–363 (RRGL…SGSR) and 417–434 (SSGP…LLLD). Basic and acidic residues predominate over residues 494–506 (DPKEDSRVTKGDT). Residues 507–521 (ELEDDFYGSDSSEEE) show a composition bias toward acidic residues. The span at 625–634 (QPLEQSLDSS) shows a compositional bias: polar residues.

This chain is Protein CFAP20DC, found in Rattus norvegicus (Rat).